The primary structure comprises 370 residues: Peptidoglycan glycosyltransferase MrdB (370 aa).

The next 9 helical transmembrane spans lie at 20–40 (MLLI…SASG), 50–70 (IGQI…PPRV), 75–95 (APYL…FGAI), 136–156 (SLKN…LVAA), 160–180 (LGTS…SGLS), 183–203 (LIGV…FFLM), 263–283 (FIFA…LLAL), 312–332 (LILF…LPVV), and 336–356 (LPLV…FGIV).

This sequence belongs to the SEDS family. MrdB/RodA subfamily.

The protein localises to the cell inner membrane. It carries out the reaction [GlcNAc-(1-&gt;4)-Mur2Ac(oyl-L-Ala-gamma-D-Glu-L-Lys-D-Ala-D-Ala)](n)-di-trans,octa-cis-undecaprenyl diphosphate + beta-D-GlcNAc-(1-&gt;4)-Mur2Ac(oyl-L-Ala-gamma-D-Glu-L-Lys-D-Ala-D-Ala)-di-trans,octa-cis-undecaprenyl diphosphate = [GlcNAc-(1-&gt;4)-Mur2Ac(oyl-L-Ala-gamma-D-Glu-L-Lys-D-Ala-D-Ala)](n+1)-di-trans,octa-cis-undecaprenyl diphosphate + di-trans,octa-cis-undecaprenyl diphosphate + H(+). Its pathway is cell wall biogenesis; peptidoglycan biosynthesis. Functionally, peptidoglycan polymerase that is essential for cell wall elongation. This chain is Peptidoglycan glycosyltransferase MrdB, found in Escherichia coli O157:H7.